The primary structure comprises 735 residues: DNA ligase 1 (735 aa).

Residues Met1–Ala11 show a composition bias toward basic and acidic residues. A disordered region spans residues Met1 to Arg23. NAD(+)-binding positions include Asp48–Asp52, Ser97–Leu98, and Glu128. Residue Lys130 is the N6-AMP-lysine intermediate of the active site. NAD(+)-binding residues include Arg151, Glu188, Lys305, and Lys329. Residues Cys423, Cys426, Cys442, and Cys448 each coordinate Zn(2+). Residues Glu643–Ser732 enclose the BRCT domain.

The protein belongs to the NAD-dependent DNA ligase family. LigA subfamily. Mg(2+) is required as a cofactor. Mn(2+) serves as cofactor.

It carries out the reaction NAD(+) + (deoxyribonucleotide)n-3'-hydroxyl + 5'-phospho-(deoxyribonucleotide)m = (deoxyribonucleotide)n+m + AMP + beta-nicotinamide D-nucleotide.. Its function is as follows. DNA ligase that catalyzes the formation of phosphodiester linkages between 5'-phosphoryl and 3'-hydroxyl groups in double-stranded DNA using NAD as a coenzyme and as the energy source for the reaction. It is essential for DNA replication and repair of damaged DNA. The protein is DNA ligase 1 of Streptomyces coelicolor (strain ATCC BAA-471 / A3(2) / M145).